Reading from the N-terminus, the 446-residue chain is StAR-related lipid transfer protein 3 (446 aa).

The Cytoplasmic segment spans residues 1–52; that stretch reads MSKRPGDLACDLERSLPALASLGTSLSHSQSLSSHFIPPPLEKRRAISDVRR. The MENTAL domain occupies 47-218; sequence ISDVRRTFCL…YSPPESFAGS (172 aa). The chain crosses the membrane as a helical span at residues 53–73; that stretch reads TFCLFVTFDLLFISLLWIIEL. The Extracellular portion of the chain corresponds to 74–95; the sequence is NTNTGIRKNLEQEVIHYSFQSS. Residues 96-116 form a helical membrane-spanning segment; the sequence is FFDIFVLAFFRFSGLLLGYAV. The Cytoplasmic portion of the chain corresponds to 117 to 121; it reads LRLQH. The chain crosses the membrane as a helical span at residues 122-142; sequence WWVIAVTTLVSSAFLIVKVIL. Residues 143-149 lie on the Extracellular side of the membrane; sequence SELLSKG. Residues 150–170 traverse the membrane as a helical segment; it reads AFGYLLPIVSFVLAWLETWFL. Topologically, residues 171-446 are cytoplasmic; the sequence is DFKVLPQEAE…QRVGELGARA (276 aa). The short motif at 207–213 is the FFAT element; that stretch reads QFYSPPE. A phosphoserine mark is found at Ser210, Ser218, and Ser222. Residues 231–444 form the START domain; sequence SFSAQEREYI…LRQRVGELGA (214 aa).

It belongs to the STARD3 family. As to quaternary structure, homodimer. Interacts (via the MENTAL domain) with STARD3NL. Interacts (via phosphorylated FFAT motif) with VAPA (via MSP domain). Interacts (via phosphorylated FFAT motif) with VAPB (via MSP domain). Interacts (via phosphorylated FFAT motif) with MOSPD2 (via MSP domain); this interaction allows enrichment of MOSPD2 around endosomes. Phosphorylation at Ser-210 is necessary and sufficient for the direct interaction of the phosphorylated FFAT motif with the MSP domain of MOSPD2, VAPA and VAPB and allows the tethering of two membranes that participates in the formation of ER-endosome contacts. Phosphorylation of the FFAT motif leads to conformation changes. Additional phosphorylations around the core FFAT motif (QFYSPPE) are not essential but strengthen the interaction with MOSPD2, VAPA and VAPB. Phosphorylation at Ser-210 of FFAT motif drives membrane tethering between the endoplasmic reticulum and late endosomes via interaction with VAPA and VAPB that in turn allows the efficient transport of sterol mediated by the START domain.

It is found in the late endosome membrane. It carries out the reaction cholesterol(in) = cholesterol(out). Sterol-binding protein that mediates cholesterol transport from the endoplasmic reticulum to endosomes. The sterol transport mechanism is triggered by phosphorylation of FFAT motif that leads to membrane tethering between the endoplasmic reticulum and late endosomes via interaction with VAPA and VAPB. Acts as a lipid transfer protein that redirects sterol to the endosome at the expense of the cell membrane and favors membrane formation inside endosomes. May also mediate cholesterol transport between other membranes, such as mitochondria membrane or cell membrane. However, such results need additional experimental evidences; probably mainly mediates cholesterol transport from the endoplasmic reticulum to endosomes. Does not activate transcriptional cholesterol sensing. Able to bind other lipids, such as lutein, a xanthophyll carotenoids that form the macular pigment of the retina. The protein is StAR-related lipid transfer protein 3 of Mus musculus (Mouse).